Reading from the N-terminus, the 103-residue chain is Carboxysome shell protein CcmK3 (103 aa).

The region spanning 4 to 91 (AVGVIQTLGF…PPENVLAVLP (88 aa)) is the BMC domain.

Belongs to the bacterial microcompartments protein family. CcmK subfamily. Forms mixed heterohexamers with CcmK4, probably with 1:5 CcmK3:CcmK4 stoichiometry. Only very weak interactions with CcmK1 and CcmK2 were seen. Bulky residues in the pore region probably preclude the formation of homohexamers by this subunit.

The protein localises to the carboxysome. In terms of biological role, a probably minor shell protein component of the carboxysome, a polyhedral inclusion where RuBisCO (ribulose bisphosphate carboxylase, rbcL-rbcS) is sequestered. This subunit probably does not form homohexamers. The chain is Carboxysome shell protein CcmK3 from Synechocystis sp. (strain ATCC 27184 / PCC 6803 / Kazusa).